Here is a 110-residue protein sequence, read N- to C-terminus: Ribonuclease P protein component 4 (110 aa).

The Zn(2+) site is built by cysteine 65, cysteine 68, cysteine 94, and cysteine 97.

This sequence belongs to the eukaryotic/archaeal RNase P protein component 4 family. As to quaternary structure, consists of a catalytic RNA component and at least 4-5 protein subunits. It depends on Zn(2+) as a cofactor.

It localises to the cytoplasm. It carries out the reaction Endonucleolytic cleavage of RNA, removing 5'-extranucleotides from tRNA precursor.. In terms of biological role, part of ribonuclease P, a protein complex that generates mature tRNA molecules by cleaving their 5'-ends. This Methanococcus maripaludis (strain C7 / ATCC BAA-1331) protein is Ribonuclease P protein component 4.